Here is a 575-residue protein sequence, read N- to C-terminus: MHAVRYTQAFIPTLKEAPADAQVASHKLLVRAGFIRQLGAGIYDYLPLAKRSLTKIEAIVREEMNAIGGQEFFLPALHPAEIWKESGRWEVMGDNMFRLKDRKGGDYGLGMTHEEIFTAIARDELRSYRQLPQVWYQIQTKFRDEPRPKSGLLRVRQFTMKDAYSFDVDRAGLDKSYEDQRQAYEKIFTRCGLDFVAVQAHSGSMGGSESSEFMVRTDAGEDLVAACPRCRYAANTETATSRVAAEADGPGLAAPEKFPTPGVVTIEALEQAPHSVPARRQLKTLVYMADERPVIAVVRGDQELNEAKLQTATGAQVVRPAHAEEIPPLMGAHAGSLGAVRFTRARVVVDPSLADRKDMVTGANEDGFHLRGVDVRRDLLAHGATLAELRTVKAGEGCPRCDGALEVFKALEVGHIFKLGTKYSESMKATVLDAGGKQVPIVMGSYGIGVERILAAAIELHHDDNGIVFPMAIAPFHATVLTLGPEPELRKAAEEVVAALGKEGVEVLFDDRDERAGVKFKDADLLGIPIRVAVGKKGLAAGNVEWKLRRGGAVELVPLGEVARKAAEAVRAATT.

Belongs to the class-II aminoacyl-tRNA synthetase family. ProS type 1 subfamily. Homodimer.

It is found in the cytoplasm. It catalyses the reaction tRNA(Pro) + L-proline + ATP = L-prolyl-tRNA(Pro) + AMP + diphosphate. In terms of biological role, catalyzes the attachment of proline to tRNA(Pro) in a two-step reaction: proline is first activated by ATP to form Pro-AMP and then transferred to the acceptor end of tRNA(Pro). As ProRS can inadvertently accommodate and process non-cognate amino acids such as alanine and cysteine, to avoid such errors it has two additional distinct editing activities against alanine. One activity is designated as 'pretransfer' editing and involves the tRNA(Pro)-independent hydrolysis of activated Ala-AMP. The other activity is designated 'posttransfer' editing and involves deacylation of mischarged Ala-tRNA(Pro). The misacylated Cys-tRNA(Pro) is not edited by ProRS. This is Proline--tRNA ligase 1 from Anaeromyxobacter dehalogenans (strain 2CP-C).